Consider the following 81-residue polypeptide: Defensin-like protein 43 (81 aa).

The signal sequence occupies residues 1–27; sequence MGITKTSVTFLFLLILAAFVSNYNVLA. Cystine bridges form between cysteine 40–cysteine 79, cysteine 44–cysteine 67, cysteine 53–cysteine 77, and cysteine 57–cysteine 78.

It belongs to the DEFL family.

The protein resides in the secreted. This is Defensin-like protein 43 from Arabidopsis thaliana (Mouse-ear cress).